Consider the following 312-residue polypeptide: MRIAFLGTPAFAVAALDALDRAGHALVAVVAQPDRPAGRGQALREPATKAWARAHGVAVLQPEKVRDGTLAAALRALAPDALVVAAYGRILGKDLLTLAPHGAINVHGSLLPRWRGAAPIQWAVAEGERETGVTIMQMDEGLDTGDILLQRALELREDDTSETLAPRLAALGGEALAEALRLLEAGAIVPVRQDPAQATLARILEKEDGRVAWESPARRVADRLRGFTPWPGAFTTLEGRTLKVLEARPAADLAAPAGEPGEAEVVAGRGLAVACGGGTALLVTRVQLEGRPAQSALDLANGLRRKRFRLGT.

(6S)-5,6,7,8-tetrahydrofolate is bound at residue 109–112 (SLLP).

The protein belongs to the Fmt family.

The catalysed reaction is L-methionyl-tRNA(fMet) + (6R)-10-formyltetrahydrofolate = N-formyl-L-methionyl-tRNA(fMet) + (6S)-5,6,7,8-tetrahydrofolate + H(+). Attaches a formyl group to the free amino group of methionyl-tRNA(fMet). The formyl group appears to play a dual role in the initiator identity of N-formylmethionyl-tRNA by promoting its recognition by IF2 and preventing the misappropriation of this tRNA by the elongation apparatus. The chain is Methionyl-tRNA formyltransferase from Anaeromyxobacter dehalogenans (strain 2CP-C).